The primary structure comprises 236 residues: Purine nucleoside phosphorylase DeoD-type (236 aa).

A purine D-ribonucleoside is bound at residue His-5. Residues Gly-21, Arg-25, Arg-44, and 88-91 (RVGT) each bind phosphate. A purine D-ribonucleoside contacts are provided by residues 180 to 182 (EME) and 204 to 205 (SD). Asp-205 functions as the Proton donor in the catalytic mechanism.

This sequence belongs to the PNP/UDP phosphorylase family. In terms of assembly, homohexamer; trimer of homodimers.

It carries out the reaction a purine D-ribonucleoside + phosphate = a purine nucleobase + alpha-D-ribose 1-phosphate. It catalyses the reaction a purine 2'-deoxy-D-ribonucleoside + phosphate = a purine nucleobase + 2-deoxy-alpha-D-ribose 1-phosphate. In terms of biological role, catalyzes the reversible phosphorolytic breakdown of the N-glycosidic bond in the beta-(deoxy)ribonucleoside molecules, with the formation of the corresponding free purine bases and pentose-1-phosphate. The polypeptide is Purine nucleoside phosphorylase DeoD-type (Shewanella sp. (strain MR-4)).